The sequence spans 85 residues: Small ribosomal subunit protein bS16 (85 aa).

It belongs to the bacterial ribosomal protein bS16 family.

This Xanthomonas euvesicatoria pv. vesicatoria (strain 85-10) (Xanthomonas campestris pv. vesicatoria) protein is Small ribosomal subunit protein bS16.